A 321-amino-acid chain; its full sequence is Olfactory receptor 3A3 (321 aa).

The Extracellular segment spans residues 1 to 34 (MSLQKLMEPEAGTNRTAVAEFILLGLVQTEEMQP). N14 is a glycosylation site (N-linked (GlcNAc...) asparagine). The helical transmembrane segment at 35–58 (VVFVLLLFAYLVTTGGNLSILAAV) threads the bilayer. Over 59-66 (LVEPKLHA) the chain is Cytoplasmic. The helical transmembrane segment at 67-88 (PMYFFLGNLSVLDVGCITVTVP) threads the bilayer. Over 89–109 (AMLGRLLSHKSTISYDACLSQ) the chain is Extracellular. C106 and C198 are disulfide-bonded. Residues 110-129 (LFFFHLLAGMDCFLLTAMAY) form a helical membrane-spanning segment. Over 130–149 (DRLLAICQPLTYSTRMSQTV) the chain is Cytoplasmic. Residues 150-167 (QRMLVAASWACAFTNALT) form a helical membrane-spanning segment. The Extracellular portion of the chain corresponds to 168–205 (HTVAMSTLNFCGPNEVNHFYCDLPQLFQLSCSSTQLNE). A helical membrane pass occupies residues 206–228 (LLLFVAAAFMAVAPLVFISVSYA). Topologically, residues 229–245 (HVVAAVLQIRSAEGRKK) are cytoplasmic. A helical transmembrane segment spans residues 246–268 (AFSTCGSHLTVVGIFYGTGVFSY). Residues 269-281 (MRLGSVESSDKDK) lie on the Extracellular side of the membrane. The chain crosses the membrane as a helical span at residues 282–301 (GVGVFMTVINPMLNPLIYSL). Over 302–321 (RNTDVQGALCQLLVGKRSLT) the chain is Cytoplasmic.

This sequence belongs to the G-protein coupled receptor 1 family.

Its subcellular location is the cell membrane. Odorant receptor. This chain is Olfactory receptor 3A3 (OR3A3), found in Homo sapiens (Human).